Here is a 916-residue protein sequence, read N- to C-terminus: Translation initiation factor IF-2 (916 aa).

The segment at 50–326 (NRDKESTSQP…NSTLQQGFNK (277 aa)) is disordered. The span at 109 to 241 (AQREAEEKAR…LAEENAEKWT (133 aa)) shows a compositional bias: basic and acidic residues. Residues 277–291 (GRGRAAKAPRPKKNN) show a composition bias toward basic residues. Positions 292–304 (RHSEKADREEARA) are enriched in basic and acidic residues. The tr-type G domain occupies 415-584 (SRAPVVTIMG…LLQAEVLELK (170 aa)). The G1 stretch occupies residues 424-431 (GHVDHGKT). Position 424-431 (424-431 (GHVDHGKT)) interacts with GTP. The tract at residues 449–453 (GITQH) is G2. The tract at residues 470–473 (DTPG) is G3. Residues 470–474 (DTPGH) and 524–527 (NKID) contribute to the GTP site. Residues 524–527 (NKID) form a G4 region. Positions 560-562 (SAK) are G5.

This sequence belongs to the TRAFAC class translation factor GTPase superfamily. Classic translation factor GTPase family. IF-2 subfamily.

Its subcellular location is the cytoplasm. Its function is as follows. One of the essential components for the initiation of protein synthesis. Protects formylmethionyl-tRNA from spontaneous hydrolysis and promotes its binding to the 30S ribosomal subunits. Also involved in the hydrolysis of GTP during the formation of the 70S ribosomal complex. The chain is Translation initiation factor IF-2 from Proteus mirabilis (strain HI4320).